The sequence spans 578 residues: E3 ubiquitin-protein ligase Praja-1 (578 aa).

Residues 1–298 are disordered; it reads MSHQERIASQ…KVPRRRRTMA (298 aa). Basic and acidic residues-rich tracts occupy residues 57 to 67 and 107 to 116; these read DYSRYPPREYR and KFKDDPEKGA. The span at 151-163 shows a compositional bias: polar residues; it reads SKQNGSSASQISS. T231 is subject to Phosphothreonine. 2 stretches are compositionally biased toward basic and acidic residues: residues 243–264 and 273–290; these read RWRDAADAEEAHAEGLARRGRG and RYAEDQDARSEQAKADKV. Phosphoserine occurs at positions 317 and 319. The segment at 332–397 is disordered; it reads RSREQPQSSS…QASLEEGEIP (66 aa). Positions 359–373 are enriched in low complexity; sequence AGAGSLASAGSNGSG. Over residues 377-395 the composition is skewed to acidic residues; it reads EVQDPSLQEEEQASLEEGE. The RING-type zinc finger occupies 530–571; it reads CPICCSEYVKGEVATELPCHHYFHKPCVSIWLQKSGTCPVCR.

In terms of assembly, binds ubiquitin-conjugating enzymes (E2s). Binds, in vitro and in vivo, the MAGE conserved domain of MAGED1. Binds weakly Necdin, in vitro. Interacts with UBE2D2. In terms of processing, substrate for E2-dependent ubiquitination. In terms of tissue distribution, expressed in brain, liver, kidney. Highest levels in brain where it is found in many regions including cortical and subcortical areas and in neurons of the amygdala. Weak expression also found in testis. Also expressed in developing embryo.

The catalysed reaction is S-ubiquitinyl-[E2 ubiquitin-conjugating enzyme]-L-cysteine + [acceptor protein]-L-lysine = [E2 ubiquitin-conjugating enzyme]-L-cysteine + N(6)-ubiquitinyl-[acceptor protein]-L-lysine.. In terms of biological role, has E2-dependent E3 ubiquitin-protein ligase activity. Ubiquitinates MAGED1 antigen leading to its subsequent degradation by proteasome. May be involved in protein sorting. The polypeptide is E3 ubiquitin-protein ligase Praja-1 (Pja1) (Mus musculus (Mouse)).